A 71-amino-acid chain; its full sequence is uncharacterized protein (71 aa).

The helical transmembrane segment at phenylalanine 12 to leucine 32 threads the bilayer.

The protein resides in the membrane. This is an uncharacterized protein from Sinorhizobium fredii (strain NBRC 101917 / NGR234).